We begin with the raw amino-acid sequence, 305 residues long: Transcriptional activator protein PfeR (305 aa).

Residues 79 to 192 (RLLLVEDDPR…ELDARTDALL (114 aa)) enclose the Response regulatory domain. A 4-aspartylphosphate modification is found at Asp-128. A DNA-binding region (ompR/PhoB-type) is located at residues 200–301 (LPLAQRRDTR…VRGQGYLLVE (102 aa)).

In terms of processing, phosphorylated by PfeS.

It is found in the cytoplasm. Its function is as follows. Member of the two-component regulatory system PfeR/PfeS. Activates expression of the ferric enterobactin receptor. The protein is Transcriptional activator protein PfeR (pfeR) of Pseudomonas aeruginosa (strain ATCC 15692 / DSM 22644 / CIP 104116 / JCM 14847 / LMG 12228 / 1C / PRS 101 / PAO1).